The following is a 229-amino-acid chain: 2-C-methyl-D-erythritol 4-phosphate cytidylyltransferase (229 aa).

The protein belongs to the IspD/TarI cytidylyltransferase family. IspD subfamily.

It catalyses the reaction 2-C-methyl-D-erythritol 4-phosphate + CTP + H(+) = 4-CDP-2-C-methyl-D-erythritol + diphosphate. It participates in isoprenoid biosynthesis; isopentenyl diphosphate biosynthesis via DXP pathway; isopentenyl diphosphate from 1-deoxy-D-xylulose 5-phosphate: step 2/6. In terms of biological role, catalyzes the formation of 4-diphosphocytidyl-2-C-methyl-D-erythritol from CTP and 2-C-methyl-D-erythritol 4-phosphate (MEP). The sequence is that of 2-C-methyl-D-erythritol 4-phosphate cytidylyltransferase from Neisseria gonorrhoeae (strain ATCC 700825 / FA 1090).